Reading from the N-terminus, the 253-residue chain is Probable transcriptional regulatory protein TM_0466 (253 aa).

The protein belongs to the TACO1 family.

Its subcellular location is the cytoplasm. This chain is Probable transcriptional regulatory protein TM_0466, found in Thermotoga maritima (strain ATCC 43589 / DSM 3109 / JCM 10099 / NBRC 100826 / MSB8).